A 118-amino-acid polypeptide reads, in one-letter code: Large ribosomal subunit protein uL18 (118 aa).

Belongs to the universal ribosomal protein uL18 family. As to quaternary structure, part of the 50S ribosomal subunit; part of the 5S rRNA/L5/L18/L25 subcomplex. Contacts the 5S and 23S rRNAs.

Functionally, this is one of the proteins that bind and probably mediate the attachment of the 5S RNA into the large ribosomal subunit, where it forms part of the central protuberance. This Parvibaculum lavamentivorans (strain DS-1 / DSM 13023 / NCIMB 13966) protein is Large ribosomal subunit protein uL18.